The primary structure comprises 356 residues: Butyrate kinase (356 aa).

It belongs to the acetokinase family.

Its subcellular location is the cytoplasm. It catalyses the reaction butanoate + ATP = butanoyl phosphate + ADP. The protein operates within lipid metabolism; butanoate metabolism. Catalyzes the conversion of butyryl-CoA through butyryl phosphate to butyrate. The sequence is that of Butyrate kinase from Clostridium tetani (strain Massachusetts / E88).